The following is a 203-amino-acid chain: Akirin-2 (203 aa).

Phosphoserine occurs at positions 18 and 21. The short motif at 22–27 (PKRRRC) is the Nuclear localization signal element. Residue Ser57 is modified to Phosphoserine. A disordered region spans residues 115–137 (PHAFLLSGPASPGTPSGTSSPLK). The segment covering 119-135 (LLSGPASPGTPSGTSSP) has biased composition (low complexity). The short motif at 200–203 (SYVS) is the SYVS motif element.

This sequence belongs to the akirin family. As to quaternary structure, homodimer. Interacts with IPO9; the interaction is direct. Associates with 20S and 26S proteasomes. Interacts with SMARCD1; promoting SWI/SNF complex recruitment. Interacts with NFKBIZ. Interacts with YWHAB. Polyubiquitinated. Polyubiquitination is dependent of UBR5 that extends pre-ubiquitinated AKIRIN2.

It is found in the nucleus. The protein resides in the cytoplasm. It localises to the membrane. Functionally, molecular adapter that acts as a bridge between a variety of multiprotein complexes, and which is involved in embryonic development, immunity, myogenesis and brain development. Plays a key role in nuclear protein degradation by promoting import of proteasomes into the nucleus: directly binds to fully assembled 20S proteasomes at one end and to nuclear import receptor IPO9 at the other end, bridging them together and mediating the import of pre-assembled proteasome complexes through the nuclear pore. Involved in innate immunity by regulating the production of interleukin-6 (IL6) downstream of Toll-like receptor (TLR): acts by bridging the NF-kappa-B inhibitor NFKBIZ and the SWI/SNF complex, leading to promote induction of IL6. Also involved in adaptive immunity by promoting B-cell activation. Involved in brain development: required for the survival and proliferation of cerebral cortical progenitor cells. Involved in myogenesis: required for skeletal muscle formation and skeletal development, possibly by regulating expression of muscle differentiation factors. The protein is Akirin-2 of Bos taurus (Bovine).